Consider the following 456-residue polypeptide: Cysteine--tRNA ligase (456 aa).

A Zn(2+)-binding site is contributed by Cys28. Residues 30 to 40 (ITVYDHCHLGH) carry the 'HIGH' region motif. The Zn(2+) site is built by Cys209, His234, and Glu238. A 'KMSKS' region motif is present at residues 266–270 (KMAKS). Residue Lys269 participates in ATP binding.

It belongs to the class-I aminoacyl-tRNA synthetase family. As to quaternary structure, monomer. Zn(2+) serves as cofactor.

The protein resides in the cytoplasm. The catalysed reaction is tRNA(Cys) + L-cysteine + ATP = L-cysteinyl-tRNA(Cys) + AMP + diphosphate. This Legionella pneumophila (strain Paris) protein is Cysteine--tRNA ligase.